The sequence spans 279 residues: uncharacterized protein (279 aa).

The N-terminal stretch at 1–19 is a signal peptide; that stretch reads MKLKLYLIPLLASGIILSA. Cysteine 20 is lipidated: N-palmitoyl cysteine. Cysteine 20 carries the S-diacylglycerol cysteine lipid modification.

Belongs to the MG439/MG440 family.

It localises to the cell membrane. This is an uncharacterized protein from Mycoplasma pneumoniae (strain ATCC 29342 / M129 / Subtype 1) (Mycoplasmoides pneumoniae).